The chain runs to 90 residues: Probable Fe(2+)-trafficking protein (90 aa).

Belongs to the Fe(2+)-trafficking protein family.

In terms of biological role, could be a mediator in iron transactions between iron acquisition and iron-requiring processes, such as synthesis and/or repair of Fe-S clusters in biosynthetic enzymes. The chain is Probable Fe(2+)-trafficking protein from Haemophilus influenzae (strain 86-028NP).